The following is an 82-amino-acid chain: DEKPKLILPTPAPPNLPQLVGGGGGNRKDGFGVSVDAHQKVWTSDNGGHSIGVSPGYSQHLPGPYGNSRPDYRIGAGYSYNF.

Disordered regions lie at residues 1-32 (DEKPKLILPTPAPPNLPQLVGGGGGNRKDGFG) and 45-69 (DNGGHSIGVSPGYSQHLPGPYGNSR). Position 82 is a phenylalanine amide (Phe-82).

Belongs to the attacin/sarcotoxin-2 family.

It localises to the secreted. Its function is as follows. Antimicrobial peptide required to resist Gram-negative bacterial infections, regulated by Dredd. This Protophormia terraenovae (Northern blowfly) protein is Diptericin-A.